Here is a 251-residue protein sequence, read N- to C-terminus: Phosphate import ATP-binding protein PstB 2 (251 aa).

Residues 6 to 246 (FNIENLDLFY…PRDDRTRGYV (241 aa)) enclose the ABC transporter domain. Residue 38–45 (GPSGCGKS) participates in ATP binding.

The protein belongs to the ABC transporter superfamily. Phosphate importer (TC 3.A.1.7) family. As to quaternary structure, the complex is composed of two ATP-binding proteins (PstB), two transmembrane proteins (PstC and PstA) and a solute-binding protein (PstS).

It localises to the cell inner membrane. The enzyme catalyses phosphate(out) + ATP + H2O = ADP + 2 phosphate(in) + H(+). Functionally, part of the ABC transporter complex PstSACB involved in phosphate import. Responsible for energy coupling to the transport system. The polypeptide is Phosphate import ATP-binding protein PstB 2 (Vibrio cholerae serotype O1 (strain ATCC 39315 / El Tor Inaba N16961)).